We begin with the raw amino-acid sequence, 230 residues long: N-(5'-phosphoribosyl)anthranilate isomerase (230 aa).

This sequence belongs to the TrpF family.

It carries out the reaction N-(5-phospho-beta-D-ribosyl)anthranilate = 1-(2-carboxyphenylamino)-1-deoxy-D-ribulose 5-phosphate. Its pathway is amino-acid biosynthesis; L-tryptophan biosynthesis; L-tryptophan from chorismate: step 3/5. The chain is N-(5'-phosphoribosyl)anthranilate isomerase from Thermosynechococcus vestitus (strain NIES-2133 / IAM M-273 / BP-1).